The following is a 518-amino-acid chain: Integrator complex subunit 14 (518 aa).

A VWFA domain is found at 2-204 (PTVVVMDVSL…KNVQSMFGKL (203 aa)). Residues serine 10, serine 12, and threonine 86 each contribute to the Mg(2+) site. The disordered stretch occupies residues 373 to 394 (SDAKENPYGDDDNKSPFPLQPK). The span at 374–386 (DAKENPYGDDDNK) shows a compositional bias: basic and acidic residues.

This sequence belongs to the Integrator subunit 14 family. As to quaternary structure, component of the Integrator complex, composed of core subunits INTS1, INTS2, INTS3, INTS4, INTS5, INTS6, INTS7, INTS8, INTS9/RC74, INTS10, INTS11/CPSF3L, INTS12, INTS13, INTS14 and INTS15. The core complex associates with protein phosphatase 2A subunits PPP2CA and PPP2R1A, to form the Integrator-PP2A (INTAC) complex. INTS14 is part of the tail subcomplex, composed of INTS10, INTS13, INTS14 and INTS15.

The protein resides in the nucleus. In terms of biological role, component of the integrator complex, a multiprotein complex that terminates RNA polymerase II (Pol II) transcription in the promoter-proximal region of genes. The integrator complex provides a quality checkpoint during transcription elongation by driving premature transcription termination of transcripts that are unfavorably configured for transcriptional elongation: the complex terminates transcription by (1) catalyzing dephosphorylation of the C-terminal domain (CTD) of Pol II subunit POLR2A/RPB1 and SUPT5H/SPT5, (2) degrading the exiting nascent RNA transcript via endonuclease activity and (3) promoting the release of Pol II from bound DNA. The integrator complex is also involved in terminating the synthesis of non-coding Pol II transcripts, such as enhancer RNAs (eRNAs), small nuclear RNAs (snRNAs), telomerase RNAs and long non-coding RNAs (lncRNAs). Within the integrator complex, INTS14 is part of the integrator tail module that acts as a platform for the recruitment of transcription factors at promoters. The protein is Integrator complex subunit 14 of Gallus gallus (Chicken).